Reading from the N-terminus, the 386-residue chain is Putative F-box/kelch-repeat protein At4g11750 (386 aa).

The F-box domain maps to 5 to 51 (PVDLPYIPDDLLLNCLARVSRLYYPILSLVSKRFRSLVASLELYEIR). 3 Kelch repeats span residues 187 to 236 (KIYV…VYDG), 238 to 285 (LYLF…YGRS), and 287 to 324 (VLMWYNTEERLWRYLKGLKKLPKLPKDCTCVRLLGYSG).

This chain is Putative F-box/kelch-repeat protein At4g11750, found in Arabidopsis thaliana (Mouse-ear cress).